Here is a 209-residue protein sequence, read N- to C-terminus: MTGRFIVLDGIDGCGKSTQIRHLAQWLPASGLMPSTAQLICTREPGGTPLGQSIRELLLHTEADQVPSVTAELLLYAADRAQHVDTVIRPALLRGDWVLSDRFAGSTLAYQGYGRGLDRQLITRLESIATTGLEPDLTAWLMVPVEVSLQRRHGEKEDRIEAEGRAFLRRVADGFAVLAEQRNWSQIDAQQSVSKLSQVLEQTLRETLQ.

10–17 (GIDGCGKS) contributes to the ATP binding site.

Belongs to the thymidylate kinase family.

It carries out the reaction dTMP + ATP = dTDP + ADP. Functionally, phosphorylation of dTMP to form dTDP in both de novo and salvage pathways of dTTP synthesis. The polypeptide is Thymidylate kinase (Synechococcus sp. (strain CC9902)).